Consider the following 389-residue polypeptide: Homoserine O-acetyltransferase (389 aa).

Residues 1 to 21 (MAALRAGKTNNEADQPSSPVL) are disordered. Residues 8–18 (KTNNEADQPSS) show a composition bias toward polar residues. Positions 56-366 (NAILVCHALT…DRGHDAFLLD (311 aa)) constitute an AB hydrolase-1 domain. S161 serves as the catalytic Nucleophile. R231 is a binding site for substrate. Catalysis depends on residues D327 and H360. D361 contributes to the substrate binding site.

The protein belongs to the AB hydrolase superfamily. MetX family. In terms of assembly, homodimer.

The protein resides in the cytoplasm. The enzyme catalyses L-homoserine + acetyl-CoA = O-acetyl-L-homoserine + CoA. It participates in amino-acid biosynthesis; L-methionine biosynthesis via de novo pathway; O-acetyl-L-homoserine from L-homoserine: step 1/1. In terms of biological role, transfers an acetyl group from acetyl-CoA to L-homoserine, forming acetyl-L-homoserine. In Mesorhizobium japonicum (strain LMG 29417 / CECT 9101 / MAFF 303099) (Mesorhizobium loti (strain MAFF 303099)), this protein is Homoserine O-acetyltransferase.